The chain runs to 157 residues: MNLLMLTFIICGLLTQVTKGSFEPQKCWKNNIGHCRRRCLDTERYILLCRNKLSCCISIIISHEYTRRPAFPVIHLEDITFDYSDVDSFTGSPVSMLNDLITFDTTKFGETITPETNTPETTMPPSETTSSKTTMPPSETATSETMPPPSQTALTHN.

The first 20 residues, Met-1–Gly-20, serve as a signal peptide directing secretion. Cystine bridges form between Cys-27/Cys-55, Cys-35/Cys-49, and Cys-39/Cys-56. The tract at residues Gly-109–Asn-157 is disordered. Low complexity predominate over residues Glu-110 to Thr-140. Residues Ala-141–Asn-157 are compositionally biased toward polar residues.

The protein belongs to the beta-defensin family.

The protein resides in the secreted. Its function is as follows. Has antibacterial activity. This is Beta-defensin 125 (DEFB125) from Pongo pygmaeus (Bornean orangutan).